A 151-amino-acid polypeptide reads, in one-letter code: SsrA-binding protein (151 aa).

This sequence belongs to the SmpB family.

The protein resides in the cytoplasm. Functionally, required for rescue of stalled ribosomes mediated by trans-translation. Binds to transfer-messenger RNA (tmRNA), required for stable association of tmRNA with ribosomes. tmRNA and SmpB together mimic tRNA shape, replacing the anticodon stem-loop with SmpB. tmRNA is encoded by the ssrA gene; the 2 termini fold to resemble tRNA(Ala) and it encodes a 'tag peptide', a short internal open reading frame. During trans-translation Ala-aminoacylated tmRNA acts like a tRNA, entering the A-site of stalled ribosomes, displacing the stalled mRNA. The ribosome then switches to translate the ORF on the tmRNA; the nascent peptide is terminated with the 'tag peptide' encoded by the tmRNA and targeted for degradation. The ribosome is freed to recommence translation, which seems to be the essential function of trans-translation. This is SsrA-binding protein from Flavobacterium johnsoniae (strain ATCC 17061 / DSM 2064 / JCM 8514 / BCRC 14874 / CCUG 350202 / NBRC 14942 / NCIMB 11054 / UW101) (Cytophaga johnsonae).